A 297-amino-acid polypeptide reads, in one-letter code: Probable transcription factor vicR (297 aa).

2 disordered regions span residues 45–80 (LPGL…HSET) and 100–134 (TNQA…KNVH). Over residues 58–67 (QKEEMRRKNA) the composition is skewed to basic and acidic residues. The span at 69 to 80 (AQMQNDSNHSET) shows a compositional bias: polar residues. Over residues 110–124 (RSREDITNSRAERHS) the composition is skewed to basic and acidic residues.

It is found in the nucleus. Functionally, probable transcription factor; part of the gene cluster that mediates the biosynthesis of the secondary metabolite victorin, the molecular basis for Victoria blight of oats. May play a role in the regulation of the production of victorin. In Bipolaris victoriae (strain FI3) (Victoria blight of oats agent), this protein is Probable transcription factor vicR.